A 211-amino-acid chain; its full sequence is Molybdenum cofactor guanylyltransferase (211 aa).

Residues L12–G14, K25, N53, D71, and D101 each bind GTP. D101 serves as a coordination point for Mg(2+).

This sequence belongs to the MobA family. In terms of assembly, monomer. It depends on Mg(2+) as a cofactor.

It is found in the cytoplasm. It catalyses the reaction Mo-molybdopterin + GTP + H(+) = Mo-molybdopterin guanine dinucleotide + diphosphate. Functionally, transfers a GMP moiety from GTP to Mo-molybdopterin (Mo-MPT) cofactor (Moco or molybdenum cofactor) to form Mo-molybdopterin guanine dinucleotide (Mo-MGD) cofactor. In Acidovorax ebreus (strain TPSY) (Diaphorobacter sp. (strain TPSY)), this protein is Molybdenum cofactor guanylyltransferase.